The chain runs to 397 residues: Acetate kinase (397 aa).

Asn7 provides a ligand contact to Mg(2+). Lys14 provides a ligand contact to ATP. Arg90 is a binding site for substrate. Asp147 (proton donor/acceptor) is an active-site residue. Residues 207-211, 282-284, and 330-334 each bind ATP; these read HLGNG, DFR, and GLGEN. Glu383 serves as a coordination point for Mg(2+).

Belongs to the acetokinase family. As to quaternary structure, homodimer. It depends on Mg(2+) as a cofactor. The cofactor is Mn(2+).

The protein localises to the cytoplasm. It carries out the reaction acetate + ATP = acetyl phosphate + ADP. It participates in metabolic intermediate biosynthesis; acetyl-CoA biosynthesis; acetyl-CoA from acetate: step 1/2. Catalyzes the formation of acetyl phosphate from acetate and ATP. Can also catalyze the reverse reaction. The protein is Acetate kinase of Clostridium botulinum (strain ATCC 19397 / Type A).